Consider the following 259-residue polypeptide: Protein CDI (259 aa).

Residues 236-259 (FADLWLNEMEEYNKENKKEADNAK) are a coiled coil.

Mostly expressed in pollen grains and pollen tubes, and, at low levels, in seedlings, roots, stems, leaves, flowers and siliques.

The protein localises to the cytoplasm. It is found in the cytosol. Functionally, probable nucleotide-diphospho-sugar transferase required for pollen germination and tube growth. In Arabidopsis thaliana (Mouse-ear cress), this protein is Protein CDI.